We begin with the raw amino-acid sequence, 122 residues long: MSNYRYSKLNEEEISLEDMPSSANQILTRQEQIIQEQDDELELVGNSVRTLRGMSSMIGDELDQQSTMLDDLGQEMEYSETRLDTAMKKMAKLTHLEDESSQCKMIMVLSALLFFLVFVLLV.

Residues 1 to 100 lie on the Cytoplasmic side of the membrane; that stretch reads MSNYRYSKLN…AKLTHLEDES (100 aa). One can recognise a t-SNARE coiled-coil homology domain in the interval 31–93; that stretch reads EQIIQEQDDE…DTAMKKMAKL (63 aa). The chain crosses the membrane as a helical; Anchor for type IV membrane protein span at residues 101–121; it reads SQCKMIMVLSALLFFLVFVLL. A topological domain (extracellular) is located at residue V122.

This sequence belongs to the syntaxin family.

Its subcellular location is the membrane. Its function is as follows. SNARE promoting movement of transport vesicles to target membranes. Potentially functions in retrograde trafficking and in the endocytic recycling pathway. In Caenorhabditis elegans, this protein is Putative syntaxin 6 (syx-6).